The primary structure comprises 153 residues: ORM1-like protein 2 (153 aa).

At 1 to 21 (MNVGVAHSEVNPNTRVMSSRG) the chain is on the cytoplasmic side. A run of 2 helical transmembrane segments spans residues 22-42 (IWLA…SIPF) and 43-63 (FSIP…MYLL). Topologically, residues 64-105 (LHTVKGTPFETPDQGKDRLLTHWEQIDYGMQCTSSRKFLSIS) are cytoplasmic. The helical transmembrane segment at 106–126 (PVVLYLLTSFYIKYDPAHFMI) threads the bilayer. Residues 127–153 (NTASLLSVLLPKLPQFHGVRVFGINKY) are Extracellular-facing.

The protein belongs to the ORM family. Ceramide-sensitive subunit of the serine palmitoyltransferase (SPT) complex, which is also composed of SPTLC1, SPTLC2/3 and SPTSSA/B.

It is found in the endoplasmic reticulum membrane. Plays an essential role in the homeostatic regulation of sphingolipid de novo biosynthesis by modulating the activity of the serine palmitoyltransferase (SPT) in response to ceramide levels. When complexed to SPT, the binding of ceramides to its N-terminus stabilizes a conformation that block SPT substrate entry, hence preventing SPT catalytic activity. Through this mechanism, maintains ceramide levels at sufficient concentrations for the production of complex sphingolipids, but which prevents the accumulation of ceramides to levels that trigger apoptosis. This chain is ORM1-like protein 2 (ORMDL2), found in Gallus gallus (Chicken).